The sequence spans 376 residues: Glycerol-3-phosphate acyltransferase 9 (376 aa).

The Cytoplasmic portion of the chain corresponds to 1 to 78 (MSSTAGRLVT…SNPPEPWNWN (78 aa)). Ser-13 is subject to Phosphoserine. The next 3 membrane-spanning stretches (helical) occupy residues 79-99 (IYLF…LFPL), 102-122 (FTLA…NALL), and 135-155 (VLVE…VKYH). Residues 156–376 (GPRPSIRPKQ…ESILARLEEK (221 aa)) are Cytoplasmic-facing. A catalytic region spans residues 168–180 (VANHTSMIDFIVL). The short motif at 171 to 176 (HTSMID) is the HXXXXD motif element. 209–218 (GCIWFNRSEA) serves as a coordination point for sn-glycerol 3-phosphate. The segment at 242–262 (IFPEGTCVNNNYTVMFKKGAF) is glycerol-3-phosphate binding. The interval 266-275 (CTVCPIAIKY) is catalytic. The tract at residues 369–373 (ILARL) is endoplasmic reticulum targeting.

It belongs to the 1-acyl-sn-glycerol-3-phosphate acyltransferase family. Self-interacts. Interacts with LPAT2 and LPCAT2. As to expression, up-regulated during embryogenesis. Expressed in seedlings, leaves, stems, roots, floral buds, flowers, pollen, and siliques at various developmental stages.

It localises to the endoplasmic reticulum membrane. The enzyme catalyses sn-glycerol 3-phosphate + an acyl-CoA = a 1-acyl-sn-glycero-3-phosphate + CoA. It functions in the pathway glycerolipid metabolism; triacylglycerol biosynthesis. Functionally, essential protein. Required for male and female gametophytes development. Exhibits sn-1 acyltransferase activity with high specificity for acyl-coenzyme A, thus triggering storage lipid biosynthesis and playing an important role in the Kennedy pathway of glycerolipid biosynthesis. Catalyzes triacylglycerol (TAG) accumulation involved in membrane lipid and oil biosynthesis, especially in seeds. Also contributes to the biosynthesis of both polar lipids and TAG in developing leaves, as well as lipid droplet production in developing pollen grains. Seems to not contribute to surface lipid biosynthesis (e.g. waxes and cutin). The sequence is that of Glycerol-3-phosphate acyltransferase 9 from Arabidopsis thaliana (Mouse-ear cress).